Here is a 1170-residue protein sequence, read N- to C-terminus: Glucose transport transcription regulator RGT1 (1170 aa).

Residues 1–22 (MNELNTVSTNSSDSTKNGGTSN) show a composition bias toward polar residues. The segment at 1 to 46 (MNELNTVSTNSSDSTKNGGTSNSPDDMDSAAAASHAIKKRTKASRA) is disordered. The segment at residues 47-76 (CDQCRKKKIKCDYKDEKGVCSNCQRNGDRC) is a DNA-binding region (zn(2)-C6 fungal-type). Residues 77–148 (SFDRVPLKRG…VPSTPSRSNS (72 aa)) form a disordered region. The span at 99-108 (RTNEIQDHNN) shows a compositional bias: basic and acidic residues. A compositionally biased stretch (low complexity) spans 113 to 138 (NTFDNSNNTLNNNTGNSGDNGINSNT). The segment covering 139-148 (VPSTPSRSNS) has biased composition (polar residues). 4 positions are modified to phosphoserine: Ser202, Ser205, Ser208, and Ser229. The span at 217-234 (PNEQLSYNTVQQSPITNK) shows a compositional bias: polar residues. Disordered regions lie at residues 217 to 254 (PNEQ…SASG), 269 to 288 (APTD…IPSL), 293 to 343 (SNSL…PSIS), 384 to 506 (AQQT…HPMT), 725 to 757 (DEEA…NSPN), and 946 to 974 (RPPN…GNLN). Residues 239-250 (SGNANGSVTGSG) show a composition bias toward low complexity. Basic and acidic residues predominate over residues 271 to 280 (TDDHNGEQTR). A phosphoserine mark is found at Ser283 and Ser284. 3 stretches are compositionally biased toward low complexity: residues 293–302 (SNSLLLGGQP), 309–341 (QQSQ…YNPS), and 385–397 (QQTQ…QVPQ). Residues Ser410 and Ser414 each carry the phosphoserine modification. The segment covering 411–422 (APVSVTLSTDRL) has biased composition (polar residues). Residues 424–444 (GNENNNGEINNNNGSNNSGSS) are compositionally biased toward low complexity. Polar residues predominate over residues 445–457 (KDTSQHSQESVTT). Over residues 473-488 (STKKRRKSYVSKKTKP) the composition is skewed to basic residues. The segment covering 493–506 (SISITSKDSAHPMT) has biased composition (polar residues). Position 1130 is a phosphoserine (Ser1130).

The protein belongs to the EDS1/RGT1 family. Post-translationally, glucose-induced phosphorylation regulates the DNA-binding activity. Hyperphosphorylation in cells growing on high levels of glucose does prevents DNA-binding and dephosphorylation restores DNA-binding ability.

The protein resides in the nucleus. The protein localises to the cytoplasm. In terms of biological role, glucose-responsive transcription factor that regulates expression of several glucose transporter (HXT) genes in response to glucose. In the absence of glucose, it functions as a transcriptional repressor, whereas high concentrations of glucose cause it to function as a transcriptional activator. In cells growing on low levels of glucose, has a neutral role, neither repressing nor activating transcription. Binds the consensus binding site sequence 5'-CGGANNA-3', of which multiple copies are present in all HXT promoters regulated by RGT1. The protein is Glucose transport transcription regulator RGT1 (RGT1) of Saccharomyces cerevisiae (strain YJM789) (Baker's yeast).